We begin with the raw amino-acid sequence, 216 residues long: Large ribosomal subunit protein uL24m (216 aa).

The transit peptide at 1–9 directs the protein to the mitochondrion; the sequence is MRLTALLSM. In terms of domain architecture, KOW spans 56–89; the sequence is VVRGDTVEVLSGKEKGKQGKVAQVIRARNWVILE. The disordered stretch occupies residues 167 to 186; it reads PQQWKDGPKDTSPEDTLQKT.

Belongs to the universal ribosomal protein uL24 family. Component of the mitochondrial ribosome large subunit (39S) which comprises a 16S rRNA and about 50 distinct proteins.

The protein resides in the mitochondrion. This Danio rerio (Zebrafish) protein is Large ribosomal subunit protein uL24m (mrpl24).